We begin with the raw amino-acid sequence, 324 residues long: Acetyl-coenzyme A carboxylase carboxyl transferase subunit alpha (324 aa).

The CoA carboxyltransferase C-terminal domain maps to 37 to 291; it reads KLERRLDKLK…RDFILREWLR (255 aa).

The protein belongs to the AccA family. As to quaternary structure, acetyl-CoA carboxylase is a heterohexamer composed of biotin carboxyl carrier protein (AccB), biotin carboxylase (AccC) and two subunits each of ACCase subunit alpha (AccA) and ACCase subunit beta (AccD).

The protein localises to the cytoplasm. The enzyme catalyses N(6)-carboxybiotinyl-L-lysyl-[protein] + acetyl-CoA = N(6)-biotinyl-L-lysyl-[protein] + malonyl-CoA. It participates in lipid metabolism; malonyl-CoA biosynthesis; malonyl-CoA from acetyl-CoA: step 1/1. Functionally, component of the acetyl coenzyme A carboxylase (ACC) complex. First, biotin carboxylase catalyzes the carboxylation of biotin on its carrier protein (BCCP) and then the CO(2) group is transferred by the carboxyltransferase to acetyl-CoA to form malonyl-CoA. The chain is Acetyl-coenzyme A carboxylase carboxyl transferase subunit alpha from Chlamydia abortus (strain DSM 27085 / S26/3) (Chlamydophila abortus).